The following is a 376-amino-acid chain: N-acetyldiaminopimelate deacetylase (376 aa).

Asp70 is a catalytic residue. The Proton acceptor role is filled by Glu129.

Belongs to the peptidase M20A family. N-acetyldiaminopimelate deacetylase subfamily.

It carries out the reaction N-acetyl-(2S,6S)-2,6-diaminopimelate + H2O = (2S,6S)-2,6-diaminopimelate + acetate. It functions in the pathway amino-acid biosynthesis; L-lysine biosynthesis via DAP pathway; LL-2,6-diaminopimelate from (S)-tetrahydrodipicolinate (acetylase route): step 3/3. Functionally, catalyzes the conversion of N-acetyl-diaminopimelate to diaminopimelate and acetate. The sequence is that of N-acetyldiaminopimelate deacetylase from Geobacillus sp. (strain WCH70).